The chain runs to 66 residues: uncharacterized protein (66 aa).

The signal sequence occupies residues 1 to 25; sequence MIVIILLFISIIVFLSVIQPQPSKN. Over residues 21–31 the composition is skewed to polar residues; that stretch reads QPSKNKSRQQA. The segment at 21–66 is disordered; it reads QPSKNKSRQQADSGYFGYSDHSSHHDGCSSDGGFSDSGCGGGGGGD.

This is an uncharacterized protein from Bacillus subtilis (strain 168).